We begin with the raw amino-acid sequence, 254 residues long: Cyclin homolog (254 aa).

It belongs to the cyclin family. Cyclin D subfamily.

In terms of biological role, may be highly relevant to the process of cellular transformation and rapid T-cell proliferation effected by HVS during latent infections of T-cells in susceptible hosts. The polypeptide is Cyclin homolog (72) (Saimiriine herpesvirus 2 (strain 11) (SaHV-2)).